Here is a 471-residue protein sequence, read N- to C-terminus: Putative multidrug resistance protein MdtD (471 aa).

At 1–11 (MTDLPDSTRWQ) the chain is on the periplasmic side. A helical membrane pass occupies residues 12–32 (LWIVAFGFFMQSLDTTIVNTA). Residues 33–48 (LPSMAQSLGESPLHMH) are Cytoplasmic-facing. Residues 49-69 (MVIVSYVLTVAVMLPASGWLA) form a helical membrane-spanning segment. Residues 70 to 76 (DKVGVRN) are Periplasmic-facing. A helical membrane pass occupies residues 77–97 (IFFTAIVLFTLGSLFCALSGT). Over 98–101 (LNEL) the chain is Cytoplasmic. Residues 102 to 124 (LLARALQGVGGAMMVPVGRLTVM) traverse the membrane as a helical segment. The Periplasmic portion of the chain corresponds to 125–137 (KIVPREQYMAAMT). Residues 138–158 (FVTLPGQVGPLLGPALGGLLV) traverse the membrane as a helical segment. At 159–164 (EYASWH) the chain is on the cytoplasmic side. Residues 165–185 (WIFLINIPVGIIGAIATLMLM) form a helical membrane-spanning segment. Over 186-196 (PNYTMQTRRFD) the chain is Periplasmic. A helical transmembrane segment spans residues 197–217 (LSGFLLLAVGMAVLTLALDGS). Residues 218 to 224 (KGTGFSP) are Cytoplasmic-facing. Residues 225–245 (LAIAGLVAVGVVALVLYLLHA) traverse the membrane as a helical segment. The Periplasmic portion of the chain corresponds to 246-262 (QNNNRALFSLKLFRTRN). A helical membrane pass occupies residues 263-283 (FSLGLAGSFAGRIGSGMLPFM). Residues 284–285 (TP) are Cytoplasmic-facing. A helical transmembrane segment spans residues 286–306 (VFLQIGLGFSPFHAGLMMIPM). The Periplasmic segment spans residues 307 to 341 (VLGSMGMKRIVVQVVNRFGYRRVLVATTLGLSLVT). Residues 342–362 (LLFMTTALLGWYYVLPFVLFL) traverse the membrane as a helical segment. The Cytoplasmic segment spans residues 363-395 (QGMVNSTRFSSMNTLTLKDLPDNLASSGNSLLS). The chain crosses the membrane as a helical span at residues 396–416 (MIMQLSMSIGVTIAGLLLGLF). At 417-430 (GSQHVSVDSGTTQT) the chain is on the periplasmic side. Residues 431–451 (VFMYTWLSMAFIIALPAFVFA) traverse the membrane as a helical segment. At 452–471 (RVPSDTHQNVAISRRKRSAQ) the chain is on the cytoplasmic side.

The protein belongs to the major facilitator superfamily. TCR/Tet family.

It localises to the cell inner membrane. This Escherichia coli O1:K1 / APEC protein is Putative multidrug resistance protein MdtD.